The primary structure comprises 343 residues: F17b-G fimbrial adhesin (343 aa).

Positions 1–22 are cleaved as a signal peptide; it reads MTNFYKVFLAVFILVCCNISHA. Residues 23–199 are receptor-binding lectin domain; sequence VVSFIGSTEN…LNPFTLNDTV (177 aa). A carbohydrate contacts are provided by residues 65 to 66, 110 to 111, and 138 to 141; these read AN, DT, and STQG. An intrachain disulfide couples Cys75 to Cys132. Residues 200–343 form a fimbrillin-binding domain region; that stretch reads TSCRLLTPSA…GISTFTFSYQ (144 aa). The disordered stretch occupies residues 287–307; the sequence is LKFGPDSPVKGNENQWQLSTG. Residues 298-307 show a composition bias toward polar residues; the sequence is NENQWQLSTG.

Belongs to the fimbrial protein family.

It localises to the fimbrium. Functionally, essential fimbrial adhesion factor that mediates binding to N-acetylglucosamine-containing receptors in the host intestinal microvilli, leading to colonization of the intestinal tissue, and diarrhea or septicemia. Also confers adhesiveness to laminin and basement membranes. This Escherichia coli protein is F17b-G fimbrial adhesin (f17bG).